Consider the following 247-residue polypeptide: Segregation and condensation protein A (247 aa).

This sequence belongs to the ScpA family. As to quaternary structure, component of a cohesin-like complex composed of ScpA, ScpB and the Smc homodimer, in which ScpA and ScpB bind to the head domain of Smc. The presence of the three proteins is required for the association of the complex with DNA.

Its subcellular location is the cytoplasm. In terms of biological role, participates in chromosomal partition during cell division. May act via the formation of a condensin-like complex containing Smc and ScpB that pull DNA away from mid-cell into both cell halves. This is Segregation and condensation protein A from Lactobacillus gasseri (strain ATCC 33323 / DSM 20243 / BCRC 14619 / CIP 102991 / JCM 1131 / KCTC 3163 / NCIMB 11718 / NCTC 13722 / AM63).